A 551-amino-acid chain; its full sequence is Pyrroline-5-carboxylate reductase 1 (551 aa).

Residues 279-551 are disordered; sequence LYTQKQQNKK…RHEVKTEQIN (273 aa). Composition is skewed to low complexity over residues 282–298, 306–342, 383–415, 424–441, 448–475, 487–496, and 503–520; these read QKQQ…QQHQ, QQHQ…YGHQ, QQYQ…SNQR, KSPQ…QPSS, QQQQ…QQQP, QQQQPQQQQQ, and YNNN…NNYN. A compositionally biased stretch (basic and acidic residues) spans 537–551; it reads YHDEKRHEVKTEQIN.

This sequence belongs to the pyrroline-5-carboxylate reductase family. As to quaternary structure, homodecamer; composed of 5 homodimers.

It catalyses the reaction L-proline + NADP(+) = (S)-1-pyrroline-5-carboxylate + NADPH + 2 H(+). It carries out the reaction L-proline + NAD(+) = (S)-1-pyrroline-5-carboxylate + NADH + 2 H(+). The protein operates within amino-acid biosynthesis; L-proline biosynthesis; L-proline from L-glutamate 5-semialdehyde: step 1/1. The chain is Pyrroline-5-carboxylate reductase 1 (pycr1) from Dictyostelium discoideum (Social amoeba).